We begin with the raw amino-acid sequence, 360 residues long: MKASLLKKLDVLSDRYEELTALLGDAEVISDQTRFRAYSREYAEVEPVILAFRDYRKVQADLEGAQALLKDSDPELRDLAEEEVAEARGRLAALGDSLQRMLLPKDPNDSRNVFLEIRAGTGGDEAAIFSGDLFRMYSRYAERQGWRVETLSENEGEHGGYKEVIARVEGDNVYAKLKFESGAHRVQRVPETESQGRIHTSACTVAVLPEPDEQAAIEINPADLRVDTYRSSGAGGQHVNKTDSAVRITHIPSGIVVECQEERSQHKNRAKAMAWLAAKLNDQQQAAAQQAIASTRKLLVGSGDRSERIRTYNFPQGRVTDHRINLTLYSLGEVMEGAVEQVIEPLLQEYQADQLAALGD.

Q237 is subject to N5-methylglutamine.

The protein belongs to the prokaryotic/mitochondrial release factor family. Post-translationally, methylated by PrmC. Methylation increases the termination efficiency of RF1.

The protein localises to the cytoplasm. Functionally, peptide chain release factor 1 directs the termination of translation in response to the peptide chain termination codons UAG and UAA. The polypeptide is Peptide chain release factor 1 (Pseudomonas aeruginosa (strain LESB58)).